Here is a 414-residue protein sequence, read N- to C-terminus: Mannan endo-1,4-beta-mannosidase 2 (414 aa).

Residues 1–25 (MAYFQRLISCIFVLFLLSLAFACEA) form the signal peptide. Positions 95 and 210 each coordinate substrate. Glu-211 (proton donor) is an active-site residue. A substrate-binding site is contributed by Tyr-288. Glu-328 (nucleophile) is an active-site residue. Trp-370 serves as a coordination point for substrate.

Belongs to the glycosyl hydrolase 5 (cellulase A) family.

It localises to the secreted. It catalyses the reaction Random hydrolysis of (1-&gt;4)-beta-D-mannosidic linkages in mannans, galactomannans and glucomannans.. Functionally, possesses endo-beta-mannanase activity in vitro. May be involved in seed germination by weakening the endosperm cap prior to radicle emergence. This chain is Mannan endo-1,4-beta-mannosidase 2 (MAN2), found in Solanum lycopersicum (Tomato).